We begin with the raw amino-acid sequence, 297 residues long: Esterase LipU (297 aa).

Residues S140, E239, and H269 contribute to the active site.

The protein belongs to the 'GDXG' lipolytic enzyme family.

The protein localises to the secreted. The catalysed reaction is a fatty acid ester + H2O = an aliphatic alcohol + a fatty acid + H(+). It catalyses the reaction a butanoate ester + H2O = an aliphatic alcohol + butanoate + H(+). It carries out the reaction an acetyl ester + H2O = an aliphatic alcohol + acetate + H(+). The enzyme catalyses decanoate ester + H2O = decanoate + an aliphatic alcohol + H(+). The catalysed reaction is an octanoate ester + H2O = an aliphatic alcohol + octanoate + H(+). It catalyses the reaction a dodecanoate ester + H2O = an aliphatic alcohol + dodecanoate + H(+). It carries out the reaction hexadecanoate ester + H2O = an aliphatic alcohol + hexadecanoate + H(+). With respect to regulation, inhibited by the ionic detergent SDS and by the serine protease inhibitor PMSF. Inhibited by the FDA approved drugs Diosmin, Acarbose and Ouabain. These drugs remain bound in the active site pocket and could be probable drug candidates to combat TB disease. Esterase that shows preference for short chain fatty acids. Contributes to the growth of M.tuberculosis during the nutritive stress. Elicits strong humoral response in both extrapulmonary and relapsed cases of tuberculosis patients. The chain is Esterase LipU from Mycobacterium tuberculosis (strain ATCC 25618 / H37Rv).